The primary structure comprises 340 residues: Anthranilate phosphoribosyltransferase (340 aa).

Residues Gly-83, 86 to 87, Thr-91, 93 to 96, 111 to 119, and Ser-123 contribute to the 5-phospho-alpha-D-ribose 1-diphosphate site; these read GD, NIST, and KHGNRSITS. An anthranilate-binding site is contributed by Gly-83. Position 95 (Ser-95) interacts with Mg(2+). Asn-114 provides a ligand contact to anthranilate. Arg-169 lines the anthranilate pocket. The Mg(2+) site is built by Asp-228 and Glu-229.

This sequence belongs to the anthranilate phosphoribosyltransferase family. As to quaternary structure, homodimer. Mg(2+) serves as cofactor.

The enzyme catalyses N-(5-phospho-beta-D-ribosyl)anthranilate + diphosphate = 5-phospho-alpha-D-ribose 1-diphosphate + anthranilate. The protein operates within amino-acid biosynthesis; L-tryptophan biosynthesis; L-tryptophan from chorismate: step 2/5. Its function is as follows. Catalyzes the transfer of the phosphoribosyl group of 5-phosphorylribose-1-pyrophosphate (PRPP) to anthranilate to yield N-(5'-phosphoribosyl)-anthranilate (PRA). This Solibacter usitatus (strain Ellin6076) protein is Anthranilate phosphoribosyltransferase.